The primary structure comprises 265 residues: Small ribosomal subunit protein uS2 (265 aa).

Belongs to the universal ribosomal protein uS2 family.

This chain is Small ribosomal subunit protein uS2, found in Gluconobacter oxydans (strain 621H) (Gluconobacter suboxydans).